Here is a 107-residue protein sequence, read N- to C-terminus: uncharacterized protein (107 aa).

The tract at residues 86–107 (QVSNHEEDADVLETQDDNAEQV) is disordered. Over residues 92–107 (EDADVLETQDDNAEQV) the composition is skewed to acidic residues.

This is an uncharacterized protein from Rickettsia prowazekii (strain Madrid E).